The following is a 128-amino-acid chain: MSAATDQILDQLKSLSLLEAAELVKQIEEAFGVSAAAPVGVAVAAPAAAAAAEPVEEQTEFDVILESVPADKKIAVLKIVREITGLGLKEAKDLVEAAPKAVKEAIAKDAAEDAKKRIEEAGGKVTIK.

Belongs to the bacterial ribosomal protein bL12 family. Homodimer. Part of the ribosomal stalk of the 50S ribosomal subunit. Forms a multimeric L10(L12)X complex, where L10 forms an elongated spine to which 2 to 4 L12 dimers bind in a sequential fashion. Binds GTP-bound translation factors.

Functionally, forms part of the ribosomal stalk which helps the ribosome interact with GTP-bound translation factors. Is thus essential for accurate translation. The polypeptide is Large ribosomal subunit protein bL12 (Trichormus variabilis (strain ATCC 29413 / PCC 7937) (Anabaena variabilis)).